Consider the following 1250-residue polypeptide: DNA-directed RNA polymerase subunit beta (1250 aa).

Residues 1139-1226 (GGAELAKPAP…DLFDEGDEDL (88 aa)) form a disordered region. Composition is skewed to acidic residues over residues 1155-1183 (ESGE…DPEE) and 1207-1226 (ADDD…DEDL).

Belongs to the RNA polymerase beta chain family. In terms of assembly, the RNAP catalytic core consists of 2 alpha, 1 beta, 1 beta' and 1 omega subunit. When a sigma factor is associated with the core the holoenzyme is formed, which can initiate transcription.

The enzyme catalyses RNA(n) + a ribonucleoside 5'-triphosphate = RNA(n+1) + diphosphate. In terms of biological role, DNA-dependent RNA polymerase catalyzes the transcription of DNA into RNA using the four ribonucleoside triphosphates as substrates. This Symbiobacterium thermophilum (strain DSM 24528 / JCM 14929 / IAM 14863 / T) protein is DNA-directed RNA polymerase subunit beta.